A 121-amino-acid chain; its full sequence is DNA-directed RNA polymerase subunit omega (121 aa).

The disordered stretch occupies residues 95–121 (DGDAANDLQGEEDDLGLGLDEAEDLGF). Acidic residues predominate over residues 103-121 (QGEEDDLGLGLDEAEDLGF).

The protein belongs to the RNA polymerase subunit omega family. In terms of assembly, the RNAP catalytic core consists of 2 alpha, 1 beta, 1 beta' and 1 omega subunit. When a sigma factor is associated with the core the holoenzyme is formed, which can initiate transcription.

The enzyme catalyses RNA(n) + a ribonucleoside 5'-triphosphate = RNA(n+1) + diphosphate. In terms of biological role, promotes RNA polymerase assembly. Latches the N- and C-terminal regions of the beta' subunit thereby facilitating its interaction with the beta and alpha subunits. The polypeptide is DNA-directed RNA polymerase subunit omega (Magnetococcus marinus (strain ATCC BAA-1437 / JCM 17883 / MC-1)).